Reading from the N-terminus, the 223-residue chain is Transmembrane protein 114 (223 aa).

The helical transmembrane segment at 7 to 27 (GLAGAAALTGALSFVLLAAAI) threads the bilayer. Residues Asn-55 and Asn-89 are each glycosylated (N-linked (GlcNAc...) asparagine). The next 3 helical transmembrane spans lie at 106–126 (FVIL…TGFL), 134–154 (LLLL…LAGI), and 189–209 (LALG…FLAA).

Belongs to the PMP-22/EMP/MP20 family.

It is found in the cell junction. It localises to the tight junction. The protein localises to the lateral cell membrane. Its subcellular location is the apical cell membrane. The sequence is that of Transmembrane protein 114 from Homo sapiens (Human).